We begin with the raw amino-acid sequence, 282 residues long: Pseudokinase OPG198 (282 aa).

ATP contacts are provided by Met-1 and Lys-30. Positions 1–282 (MESFKYCFDN…DRLRRLFIQD (282 aa)) constitute a Protein kinase domain.

The protein belongs to the protein kinase superfamily. Ser/Thr protein kinase family. Poxviruses subfamily. In terms of assembly, interacts with B1/VPK1. Interacts with host VRK1. Interacts with host VRK2.

It localises to the host nucleus. With respect to regulation, both catalytically active kinases B1/VPK1 and host VRK2 repress B12 inhibitory activity in a B1/VPK1 deletion mutant strain. Pseudokinase that plays a role in viral DNA replication repression by activating the antiviral protein BANF1 and inhibiting the activity of host VRK1, a cellular modulator of BANF1. The polypeptide is Pseudokinase OPG198 (OPG198) (Cynomys gunnisoni (Gunnison's prairie dog)).